Consider the following 213-residue polypeptide: Thymidylate kinase (213 aa).

An ATP-binding site is contributed by Gly-11–Thr-18.

The protein belongs to the thymidylate kinase family.

The enzyme catalyses dTMP + ATP = dTDP + ADP. Phosphorylation of dTMP to form dTDP in both de novo and salvage pathways of dTTP synthesis. The polypeptide is Thymidylate kinase (Shouchella clausii (strain KSM-K16) (Alkalihalobacillus clausii)).